Reading from the N-terminus, the 320-residue chain is Glyoxylate/hydroxypyruvate reductase B (320 aa).

Catalysis depends on residues Arg-233 and Glu-262. His-281 acts as the Proton donor in catalysis.

This sequence belongs to the D-isomer specific 2-hydroxyacid dehydrogenase family. GhrB subfamily. As to quaternary structure, homodimer.

The protein resides in the cytoplasm. It carries out the reaction glycolate + NADP(+) = glyoxylate + NADPH + H(+). The enzyme catalyses (R)-glycerate + NAD(+) = 3-hydroxypyruvate + NADH + H(+). The catalysed reaction is (R)-glycerate + NADP(+) = 3-hydroxypyruvate + NADPH + H(+). In terms of biological role, catalyzes the NADPH-dependent reduction of glyoxylate and hydroxypyruvate into glycolate and glycerate, respectively. The sequence is that of Glyoxylate/hydroxypyruvate reductase B from Pectobacterium carotovorum subsp. carotovorum (strain PC1).